Consider the following 332-residue polypeptide: Fructose-1,6-bisphosphatase class 1 1 (332 aa).

Glutamate 92, aspartate 115, leucine 117, and aspartate 118 together coordinate Mg(2+). Substrate contacts are provided by residues 118–121 (DGSS), asparagine 211, tyrosine 244, 262–264 (YLY), and lysine 274. Glutamate 280 provides a ligand contact to Mg(2+).

It belongs to the FBPase class 1 family. Homotetramer. Mg(2+) is required as a cofactor.

It is found in the cytoplasm. It catalyses the reaction beta-D-fructose 1,6-bisphosphate + H2O = beta-D-fructose 6-phosphate + phosphate. It participates in carbohydrate biosynthesis; gluconeogenesis. In Christiangramia forsetii (strain DSM 17595 / CGMCC 1.15422 / KT0803) (Gramella forsetii), this protein is Fructose-1,6-bisphosphatase class 1 1.